Here is a 109-residue protein sequence, read N- to C-terminus: uncharacterized protein (109 aa).

A helical transmembrane segment spans residues 75 to 95; it reads LHFFFLFWLLNFILFFRIHLY.

The protein resides in the membrane. This is an uncharacterized protein from Schizosaccharomyces pombe (strain 972 / ATCC 24843) (Fission yeast).